Reading from the N-terminus, the 133-residue chain is Putative redox protein FMP46, mitochondrial (133 aa).

The N-terminal 21 residues, 1–21, are a transit peptide targeting the mitochondrion; the sequence is MSFWKTLQRQPRTISLFTNDI. Residue Cys97 is part of the active site.

This sequence belongs to the FMP46 family.

The protein localises to the mitochondrion. In terms of biological role, putative mitochondrial redox protein which could be involved in the reduction of small toxic molecules. The polypeptide is Putative redox protein FMP46, mitochondrial (FMP46) (Saccharomyces cerevisiae (strain ATCC 204508 / S288c) (Baker's yeast)).